A 419-amino-acid polypeptide reads, in one-letter code: DNA ligase (419 aa).

An NTD region spans residues 1–120; sequence MLNHFPGHCS…ARQKRGAHTN (120 aa). Positions 121 to 317 are AD domain; it reads RGMIPPMLVK…NYHSAHLAKL (197 aa). The active-site N6-AMP-lysine intermediate is the Lys-151. Residues Lys-151, Glu-203, and Phe-232 each coordinate ATP. Glu-203 contributes to the a divalent metal cation binding site. Glu-291 provides a ligand contact to a divalent metal cation. 2 residues coordinate ATP: Ile-294 and Lys-316. Positions 318 to 419 are OB domain; it reads KPLLDAEFIL…REPINVLEII (102 aa).

The protein belongs to the ATP-dependent DNA ligase family.

The protein resides in the virion. It carries out the reaction ATP + (deoxyribonucleotide)n-3'-hydroxyl + 5'-phospho-(deoxyribonucleotide)m = (deoxyribonucleotide)n+m + AMP + diphosphate.. In terms of biological role, very low-fidelity DNA ligase that seals nicks in double-stranded DNA during DNA repair. Together with the viral repair DNA polymerase X, fills the single nucleotide gaps generated by the AP endonuclease. It is not essential for viral replication and recombination. Displays a very low adenylation activity towards DNA with 3'-dideoxy- or 3'-amino-terminated nicks compared to regular nick DNA. The sequence is that of DNA ligase from African swine fever virus (isolate Tick/South Africa/Pretoriuskop Pr4/1996) (ASFV).